A 410-amino-acid chain; its full sequence is Translation initiation factor 2 subunit gamma (410 aa).

The tr-type G domain occupies 9–202; that stretch reads QAEVNIGMVG…AIEEFIPTPE (194 aa). Residues 18 to 25 are G1; it reads GHVDHGKT. 4 residues coordinate Mg(2+): D21, T25, G46, and T48. 21 to 26 provides a ligand contact to GTP; the sequence is DHGKTT. The interval 46 to 50 is G2; it reads GITIK. Zn(2+) contacts are provided by C61, C64, C73, and C76. Positions 90–93 are G3; the sequence is DAPG. GTP contacts are provided by residues 145–148 and 180–182; these read NKIE and SAL. Residues 145–148 form a G4 region; it reads NKIE. The interval 180 to 182 is G5; it reads SAL.

This sequence belongs to the TRAFAC class translation factor GTPase superfamily. Classic translation factor GTPase family. EIF2G subfamily. In terms of assembly, heterotrimer composed of an alpha, a beta and a gamma chain. It depends on Mg(2+) as a cofactor.

The enzyme catalyses GTP + H2O = GDP + phosphate + H(+). EIF-2 functions in the early steps of protein synthesis by forming a ternary complex with GTP and initiator tRNA. This chain is Translation initiation factor 2 subunit gamma, found in Thermococcus onnurineus (strain NA1).